The primary structure comprises 290 residues: Signal peptidase I (290 aa).

The Cytoplasmic portion of the chain corresponds to 1 to 13 (MKFLRSVYAFCSS). The helical transmembrane segment at 14–34 (WVGTIIIVLLVIFFIAQAFII) threads the bilayer. The Extracellular segment spans residues 35–290 (PSRSMVGTLY…KIIKKEKATH (256 aa)). Residues Ser-38 and Lys-106 contribute to the active site.

Belongs to the peptidase S26 family.

The protein localises to the cell membrane. It catalyses the reaction Cleavage of hydrophobic, N-terminal signal or leader sequences from secreted and periplasmic proteins.. This is Signal peptidase I (lepB) from Helicobacter pylori (strain J99 / ATCC 700824) (Campylobacter pylori J99).